A 167-amino-acid polypeptide reads, in one-letter code: MRVEVGQIVNTHGIKGEIKVKSNSDFTDVRFQPGQVLTVVHNNNDLEYTVKSHRVHKGLHMLTFEGINNINDIEHLKGSSIYQERDHEDIVLEENEYYYSDIIGCTVFDDQETPIGRVINIFETGANDVWVIKGSKEYLIPYIADVVKEVDVENKKIIITPMEGLLD.

The 72-residue stretch at 94-165 (ENEYYYSDII…KIIITPMEGL (72 aa)) folds into the PRC barrel domain.

The protein belongs to the RimM family. Binds ribosomal protein uS19.

The protein localises to the cytoplasm. Functionally, an accessory protein needed during the final step in the assembly of 30S ribosomal subunit, possibly for assembly of the head region. Essential for efficient processing of 16S rRNA. May be needed both before and after RbfA during the maturation of 16S rRNA. It has affinity for free ribosomal 30S subunits but not for 70S ribosomes. The chain is Ribosome maturation factor RimM from Staphylococcus aureus (strain bovine RF122 / ET3-1).